We begin with the raw amino-acid sequence, 255 residues long: tRNA (guanine-N(1)-)-methyltransferase (255 aa).

S-adenosyl-L-methionine-binding positions include Gly113 and 133–138; that span reads IGDYVL.

This sequence belongs to the RNA methyltransferase TrmD family. As to quaternary structure, homodimer.

Its subcellular location is the cytoplasm. It catalyses the reaction guanosine(37) in tRNA + S-adenosyl-L-methionine = N(1)-methylguanosine(37) in tRNA + S-adenosyl-L-homocysteine + H(+). Functionally, specifically methylates guanosine-37 in various tRNAs. In Enterobacter sp. (strain 638), this protein is tRNA (guanine-N(1)-)-methyltransferase.